A 122-amino-acid chain; its full sequence is Large ribosomal subunit protein uL18 (122 aa).

Over residues 1-20 the composition is skewed to basic residues; sequence MLKKVSKNTNRQGRHQRVRN. Residues 1-22 are disordered; it reads MLKKVSKNTNRQGRHQRVRNKI.

The protein belongs to the universal ribosomal protein uL18 family. In terms of assembly, part of the 50S ribosomal subunit; part of the 5S rRNA/L5/L18/L25 subcomplex. Contacts the 5S and 23S rRNAs.

This is one of the proteins that bind and probably mediate the attachment of the 5S RNA into the large ribosomal subunit, where it forms part of the central protuberance. In Alkaliphilus metalliredigens (strain QYMF), this protein is Large ribosomal subunit protein uL18.